The following is a 477-amino-acid chain: UDP-N-acetylmuramate--L-alanine ligase (477 aa).

Residue 122–128 (GTHGKTT) coordinates ATP.

It belongs to the MurCDEF family.

Its subcellular location is the cytoplasm. The enzyme catalyses UDP-N-acetyl-alpha-D-muramate + L-alanine + ATP = UDP-N-acetyl-alpha-D-muramoyl-L-alanine + ADP + phosphate + H(+). It functions in the pathway cell wall biogenesis; peptidoglycan biosynthesis. Cell wall formation. This chain is UDP-N-acetylmuramate--L-alanine ligase, found in Xylella fastidiosa (strain M23).